The primary structure comprises 69 residues: Parvalbumin beta 3 (69 aa).

Position 1 is an N-acetylalanine (Ala-1). The 36-residue stretch at 24 to 59 (FNYKTFFKFFAIIDQDHSGFIEEEELKLFLQTFSAG) folds into the EF-hand domain. Ca(2+) is bound by residues Asp-37, Asp-39, Ser-41, Phe-43, Glu-45, and Glu-48.

Belongs to the parvalbumin family.

In muscle, parvalbumin is thought to be involved in relaxation after contraction. It binds two calcium ions. This is Parvalbumin beta 3 from Merluccius polli (Benguela hake).